We begin with the raw amino-acid sequence, 192 residues long: uncharacterized protein (192 aa).

Residues 29–160 form the Nudix hydrolase domain; sequence QRQAAVLIPV…PLDVYRRGNS (132 aa). The Nudix box signature appears at 67-89; it reads GAVDSTDASLIAAALREAQEEVA. Residues Glu-83 and Glu-87 each contribute to the Mg(2+) site.

This sequence belongs to the Nudix hydrolase family. PCD1 subfamily. Requires Mn(2+) as cofactor. Mg(2+) is required as a cofactor.

Probably mediates the hydrolysis of some nucleoside diphosphate derivatives. This is an uncharacterized protein from Salmonella dublin (strain CT_02021853).